Reading from the N-terminus, the 538-residue chain is Bifunctional purine biosynthesis protein PurH (538 aa).

The 153-residue stretch at 6-158 folds into the MGS-like domain; that stretch reads KHIPAPDLHR…KNHAYVATVV (153 aa).

It belongs to the PurH family.

The catalysed reaction is (6R)-10-formyltetrahydrofolate + 5-amino-1-(5-phospho-beta-D-ribosyl)imidazole-4-carboxamide = 5-formamido-1-(5-phospho-D-ribosyl)imidazole-4-carboxamide + (6S)-5,6,7,8-tetrahydrofolate. It catalyses the reaction IMP + H2O = 5-formamido-1-(5-phospho-D-ribosyl)imidazole-4-carboxamide. The protein operates within purine metabolism; IMP biosynthesis via de novo pathway; 5-formamido-1-(5-phospho-D-ribosyl)imidazole-4-carboxamide from 5-amino-1-(5-phospho-D-ribosyl)imidazole-4-carboxamide (10-formyl THF route): step 1/1. It functions in the pathway purine metabolism; IMP biosynthesis via de novo pathway; IMP from 5-formamido-1-(5-phospho-D-ribosyl)imidazole-4-carboxamide: step 1/1. The chain is Bifunctional purine biosynthesis protein PurH from Brucella melitensis biotype 2 (strain ATCC 23457).